We begin with the raw amino-acid sequence, 536 residues long: GMP synthase [glutamine-hydrolyzing] (536 aa).

Positions Lys-4 to Asp-206 constitute a Glutamine amidotransferase type-1 domain. Residue Cys-85 is the Nucleophile of the active site. Active-site residues include His-180 and Glu-182. Positions Trp-207–Arg-404 constitute a GMPS ATP-PPase domain. Ser-234–Ser-240 contacts ATP.

In terms of assembly, homodimer.

It carries out the reaction XMP + L-glutamine + ATP + H2O = GMP + L-glutamate + AMP + diphosphate + 2 H(+). The protein operates within purine metabolism; GMP biosynthesis; GMP from XMP (L-Gln route): step 1/1. Catalyzes the synthesis of GMP from XMP. This is GMP synthase [glutamine-hydrolyzing] from Albidiferax ferrireducens (strain ATCC BAA-621 / DSM 15236 / T118) (Rhodoferax ferrireducens).